Here is a 275-residue protein sequence, read N- to C-terminus: NH(3)-dependent NAD(+) synthetase (275 aa).

ATP is bound at residue Gly-46 to Ser-53. A Mg(2+)-binding site is contributed by Asp-52. Arg-140 contacts deamido-NAD(+). Residue Thr-160 coordinates ATP. Glu-165 contributes to the Mg(2+) binding site. 2 residues coordinate deamido-NAD(+): Lys-173 and Asp-180. ATP-binding residues include Lys-189 and Thr-211. His-260–Lys-261 serves as a coordination point for deamido-NAD(+).

It belongs to the NAD synthetase family. In terms of assembly, homodimer.

It catalyses the reaction deamido-NAD(+) + NH4(+) + ATP = AMP + diphosphate + NAD(+) + H(+). It participates in cofactor biosynthesis; NAD(+) biosynthesis; NAD(+) from deamido-NAD(+) (ammonia route): step 1/1. In terms of biological role, catalyzes the ATP-dependent amidation of deamido-NAD to form NAD. Uses ammonia as a nitrogen source. In Salmonella arizonae (strain ATCC BAA-731 / CDC346-86 / RSK2980), this protein is NH(3)-dependent NAD(+) synthetase.